An 817-amino-acid polypeptide reads, in one-letter code: Two pore calcium channel protein 1 (817 aa).

The Cytoplasmic segment spans residues 1 to 113 (MAVSLDDDVP…VHNHFFYMME (113 aa)). The tract at residues 20–65 (SAPLPPSNSLGQEQLPSKNGGSHSIHNSQVPSLVSGADSPPSSPTG) is disordered. Residues 26-51 (SNSLGQEQLPSKNGGSHSIHNSQVPS) are compositionally biased toward polar residues. A helical transmembrane segment spans residues 114 to 134 (LLTALLLLLLSLCESPAVPVL). Residues 135 to 137 (KLH) are Extracellular-facing. Residues 138-158 (TYVHATLELFALMVVVFELCM) form a helical membrane-spanning segment. Over 159-172 (KLRWLGFHTFVRHK) the chain is Cytoplasmic. The helical transmembrane segment at 173–193 (RTMVKTSVLVVQFIEAIVVLV) threads the bilayer. Topologically, residues 194–202 (RQTSHVRVT) are extracellular. Residues 203-221 (RALRCIFLVDCRYCGGVRR) traverse the membrane as a helical segment. The Cytoplasmic portion of the chain corresponds to 222–235 (NLRQIFQSLPPFMD). A helical membrane pass occupies residues 236 to 256 (ILLLLLFFMIIFAILGFYLFS). Topologically, residues 257–263 (TNPSDPY) are extracellular. Residues 264-287 (FSTLENSIVNLFVLLTTANFPDVM) constitute an intramembrane region (helical; Pore-forming). The Extracellular portion of the chain corresponds to 288 to 298 (MPSYSRNPWSC). The chain crosses the membrane as a helical span at residues 299 to 319 (VFFIVYLSIELYFIMNLLLAV). The Cytoplasmic segment spans residues 320 to 445 (VFDTFNDIEK…NILVNSKAFQ (126 aa)). Residues 446–466 (YFMYLVVAVNGVWILVETFML) traverse the membrane as a helical segment. Topologically, residues 467 to 480 (KGGNFTSKHVPWSY) are extracellular. Asn-470 is a glycosylation site (N-linked (GlcNAc...) asparagine). The helical transmembrane segment at 481–501 (LVFLTIYGVELFMKVAGLGPV) threads the bilayer. Over 502 to 504 (EYL) the chain is Cytoplasmic. A helical membrane pass occupies residues 505–527 (SSGWNLFDFSVTAFAFLGLLALT). At 528–535 (LNMEPFYF) the chain is on the extracellular side. A helical membrane pass occupies residues 536–550 (IVVLRPLQLLRLFKL). Residues 551–569 (KKRYRNVLDTMFELLPRMA) are Cytoplasmic-facing. Residues 570-590 (SLGLTLLTFYYSFAIVGMEFF) form a helical membrane-spanning segment. Residues 591-630 (NGRLTPNCCNTSTVADAYRFINHTVGNKTKVEEGYYYLNN) are Extracellular-facing. An intramembrane region (helical; Pore-forming) is located at residues 631–654 (FDNILNSFVTLFELTVVNNWYIIM). Topologically, residues 655–671 (EGVTSQTSHWSRLYFMT) are extracellular. A helical transmembrane segment spans residues 672-692 (FYIVTMVVMTIIVAFILEAFV). At 693 to 817 (FRMNYSRKSQ…GSRQRSQTVT (125 aa)) the chain is on the cytoplasmic side. Residues 770 to 794 (SLKMYQEEIQEWYEEHAREQEQQKL) are a coiled coil. The disordered stretch occupies residues 785–817 (HAREQEQQKLRGSVPGPAAQQPPGSRQRSQTVT). Residues 806–817 (PPGSRQRSQTVT) are compositionally biased toward polar residues.

This sequence belongs to the calcium channel alpha-1 subunit (TC 1.A.1.11) family. Two pore calcium channel subfamily. Dimer. Interacts with MTOR; the interaction is required for TPCN1 ATP sensitivity. Interacts with STX7, STX8 and STX12. Interacts with JPT2. Found in a complex with LSM12, TPCN1 and TPCN2. Post-translationally, N-glycosylated. Mainly expressed in epithelial tissues like lung, kidney, colon, spleen and liver (at protein level).

The protein localises to the lysosome membrane. It localises to the endosome membrane. The protein resides in the early endosome membrane. It is found in the recycling endosome membrane. It catalyses the reaction Na(+)(in) = Na(+)(out). The enzyme catalyses Ca(2+)(in) = Ca(2+)(out). Its activity is regulated as follows. Na(+) current is inhibited by ATP in a MTORC-dependent manner. ATP sensitivity is independent of PI(3,5)P2. Probably regulated by Mg(2+) ions, cytosolic Mg(2+) selectively inhibits outward current while lysosomal Mg(2+) modestly inhibits both the outward and inward currents. In the absence of Mg(2+), NAADP readily activates TPCN2, with properties similar to PI(3,5)P2. Both current elicited by PI(3,5)P2 as well as NAADP are inhibited by tetrandrine. Its function is as follows. Intracellular channel initially characterized as a non-selective Ca(2+)-permeable channel activated by NAADP (nicotinic acid adenine dinucleotide phosphate), it is also a voltage-gated highly-selective Na(+) channel activated directly by PI(3,5)P2 (phosphatidylinositol 3,5-bisphosphate) that senses pH changes and confers electrical excitability to organelles. Localizes to the early and recycling endosomes membranes where it plays a role in the uptake and processing of proteins and regulates organellar membrane excitability, membrane trafficking and pH homeostasis. Ion selectivity is not fixed but rather agonist-dependent and under defined ionic conditions, can be readily activated by both NAADP and PI(3,5)P2. Required for mTOR-dependent nutrient sensing. The protein is Two pore calcium channel protein 1 of Mus musculus (Mouse).